Here is a 105-residue protein sequence, read N- to C-terminus: UPF0235 protein RrIowa_1526 (105 aa).

Belongs to the UPF0235 family.

The polypeptide is UPF0235 protein RrIowa_1526 (Rickettsia rickettsii (strain Iowa)).